The following is a 310-amino-acid chain: uncharacterized protein (310 aa).

The active site involves histidine 239.

This sequence belongs to the IUNH family.

It is found in the cytoplasm. It localises to the nucleus. This is an uncharacterized protein from Schizosaccharomyces pombe (strain 972 / ATCC 24843) (Fission yeast).